The primary structure comprises 457 residues: Siroheme synthase 2 (457 aa).

The segment at 1–204 (MDHLPIFCQL…DDEQAVTRIT (204 aa)) is precorrin-2 dehydrogenase /sirohydrochlorin ferrochelatase. Residues 22 to 23 (DV) and 43 to 44 (LA) each bind NAD(+). Residue S128 is modified to Phosphoserine. The tract at residues 216–457 (GEVVLVGAGP…RDKLNWFSSK (242 aa)) is uroporphyrinogen-III C-methyltransferase. P225 is an S-adenosyl-L-methionine binding site. The Proton acceptor role is filled by D248. The Proton donor role is filled by K270. S-adenosyl-L-methionine contacts are provided by residues 301–303 (GGD), I306, 331–332 (TA), M382, and G411.

It in the N-terminal section; belongs to the precorrin-2 dehydrogenase / sirohydrochlorin ferrochelatase family. This sequence in the C-terminal section; belongs to the precorrin methyltransferase family.

The enzyme catalyses uroporphyrinogen III + 2 S-adenosyl-L-methionine = precorrin-2 + 2 S-adenosyl-L-homocysteine + H(+). The catalysed reaction is precorrin-2 + NAD(+) = sirohydrochlorin + NADH + 2 H(+). It carries out the reaction siroheme + 2 H(+) = sirohydrochlorin + Fe(2+). Its pathway is cofactor biosynthesis; adenosylcobalamin biosynthesis; precorrin-2 from uroporphyrinogen III: step 1/1. It functions in the pathway cofactor biosynthesis; adenosylcobalamin biosynthesis; sirohydrochlorin from precorrin-2: step 1/1. It participates in porphyrin-containing compound metabolism; siroheme biosynthesis; precorrin-2 from uroporphyrinogen III: step 1/1. The protein operates within porphyrin-containing compound metabolism; siroheme biosynthesis; siroheme from sirohydrochlorin: step 1/1. Its pathway is porphyrin-containing compound metabolism; siroheme biosynthesis; sirohydrochlorin from precorrin-2: step 1/1. In terms of biological role, multifunctional enzyme that catalyzes the SAM-dependent methylations of uroporphyrinogen III at position C-2 and C-7 to form precorrin-2 via precorrin-1. Then it catalyzes the NAD-dependent ring dehydrogenation of precorrin-2 to yield sirohydrochlorin. Finally, it catalyzes the ferrochelation of sirohydrochlorin to yield siroheme. This chain is Siroheme synthase 2, found in Cronobacter sakazakii (strain ATCC BAA-894) (Enterobacter sakazakii).